The chain runs to 89 residues: Small ribosomal subunit protein uS15 (89 aa).

Belongs to the universal ribosomal protein uS15 family. As to quaternary structure, part of the 30S ribosomal subunit. Forms a bridge to the 50S subunit in the 70S ribosome, contacting the 23S rRNA.

One of the primary rRNA binding proteins, it binds directly to 16S rRNA where it helps nucleate assembly of the platform of the 30S subunit by binding and bridging several RNA helices of the 16S rRNA. Functionally, forms an intersubunit bridge (bridge B4) with the 23S rRNA of the 50S subunit in the ribosome. This chain is Small ribosomal subunit protein uS15, found in Azorhizobium caulinodans (strain ATCC 43989 / DSM 5975 / JCM 20966 / LMG 6465 / NBRC 14845 / NCIMB 13405 / ORS 571).